A 277-amino-acid polypeptide reads, in one-letter code: F420-dependent methylenetetrahydromethanopterin dehydrogenase (277 aa).

The segment at 249–277 (EKATDSVSRKPHGADGKRLNKTKLMEKPE) is disordered.

Belongs to the MTD family.

It catalyses the reaction 5,10-methylenetetrahydromethanopterin + oxidized coenzyme F420-(gamma-L-Glu)(n) + 2 H(+) = 5,10-methenyl-5,6,7,8-tetrahydromethanopterin + reduced coenzyme F420-(gamma-L-Glu)(n). It participates in one-carbon metabolism; methanogenesis from CO(2); 5,10-methylene-5,6,7,8-tetrahydromethanopterin from 5,10-methenyl-5,6,7,8-tetrahydromethanopterin (coenzyme F420 route): step 1/1. Its function is as follows. Catalyzes the reversible reduction of methenyl-H(4)MPT(+) to methylene-H(4)MPT. This is F420-dependent methylenetetrahydromethanopterin dehydrogenase from Methanococcus aeolicus (strain ATCC BAA-1280 / DSM 17508 / OCM 812 / Nankai-3).